The primary structure comprises 447 residues: DNA primase DnaG (447 aa).

Positions 200-274 (DSIIVVEGRA…DIDYVARAPE (75 aa)) constitute a Toprim domain. Glutamate 206, aspartate 248, and aspartate 250 together coordinate Mg(2+). The disordered stretch occupies residues 316–339 (ERRRGGARKQEYTKKGSLNPQPQV).

The protein belongs to the archaeal DnaG primase family. In terms of assembly, forms a ternary complex with MCM helicase and DNA. Component of the archaeal exosome complex. It depends on Mg(2+) as a cofactor.

It catalyses the reaction ssDNA + n NTP = ssDNA/pppN(pN)n-1 hybrid + (n-1) diphosphate.. RNA polymerase that catalyzes the synthesis of short RNA molecules used as primers for DNA polymerase during DNA replication. Also part of the exosome, which is a complex involved in RNA degradation. Acts as a poly(A)-binding protein that enhances the interaction between heteromeric, adenine-rich transcripts and the exosome. This Pyrococcus furiosus (strain ATCC 43587 / DSM 3638 / JCM 8422 / Vc1) protein is DNA primase DnaG.